Consider the following 196-residue polypeptide: Blue copper protein (196 aa).

A signal peptide spans 1–22 (MAGVFKTVTFLVLVFAAVVVFA). Residues 23 to 125 (EDYDVGDDTE…GQKLSITVVA (103 aa)) form the Phytocyanin domain. A Cu cation-binding site is contributed by histidine 66. Cysteine 79 and cysteine 113 are disulfide-bonded. N-linked (GlcNAc...) asparagine glycosylation is present at asparagine 98. Residues cysteine 107, histidine 112, and glutamine 117 each contribute to the Cu cation site. Residues 133-173 (TPGAGATPAPGSTPSTGGTTPPTAGGTTTPSGSSGTTTPAG) form a disordered region. Positions 135-173 (GAGATPAPGSTPSTGGTTPPTAGGTTTPSGSSGTTTPAG) are enriched in low complexity. The GPI-anchor amidated asparagine moiety is linked to residue asparagine 174. The propeptide at 175 to 196 (AASSLGGATFLVAFVSAVVALF) is removed in mature form.

The protein localises to the cell membrane. In terms of biological role, probably acts as an electron carrier. The protein is Blue copper protein (BCB) of Arabidopsis thaliana (Mouse-ear cress).